The following is a 76-amino-acid chain: Exodeoxyribonuclease 7 small subunit (76 aa).

Belongs to the XseB family. Heterooligomer composed of large and small subunits.

The protein localises to the cytoplasm. The catalysed reaction is Exonucleolytic cleavage in either 5'- to 3'- or 3'- to 5'-direction to yield nucleoside 5'-phosphates.. Bidirectionally degrades single-stranded DNA into large acid-insoluble oligonucleotides, which are then degraded further into small acid-soluble oligonucleotides. This Enterococcus faecalis (strain ATCC 700802 / V583) protein is Exodeoxyribonuclease 7 small subunit.